The chain runs to 231 residues: Acyl-protein thioesterase 2 (231 aa).

Cysteine 2 carries S-palmitoyl cysteine lipidation. At serine 82 the chain carries Phosphoserine. Catalysis depends on charge relay system residues serine 122, aspartate 176, and histidine 210.

Belongs to the AB hydrolase superfamily. AB hydrolase 2 family. As to expression, expressed in various breast cancer cell lines.

It localises to the cytoplasm. The enzyme catalyses S-hexadecanoyl-L-cysteinyl-[protein] + H2O = L-cysteinyl-[protein] + hexadecanoate + H(+). The catalysed reaction is prostaglandin E2 1-glyceryl ester + H2O = prostaglandin E2 + glycerol + H(+). It catalyses the reaction 1-hexadecanoyl-sn-glycero-3-phosphocholine + H2O = sn-glycerol 3-phosphocholine + hexadecanoate + H(+). It carries out the reaction 1-octadecanoyl-sn-glycero-3-phosphocholine + H2O = octadecanoate + sn-glycerol 3-phosphocholine + H(+). The enzyme catalyses 1-hexadecanoyl-sn-glycero-3-phosphate + H2O = sn-glycerol 3-phosphate + hexadecanoate + H(+). The catalysed reaction is 1-hexadecanoyl-sn-glycero-3-phospho-L-serine + H2O = sn-glycero-3-phospho-L-serine + hexadecanoate + H(+). With respect to regulation, inhibited by compound 1 or (5,5-Dioxido-4H-thieno[3,2-c]thiochromen-2-yl)(4-(4-methoxyphenyl)piperazin-1-yl)methanone. In terms of biological role, acts as an acyl-protein thioesterase hydrolyzing fatty acids from S-acylated cysteine residues in proteins such as trimeric G alpha proteins, GSDMD, GAP43, ZDHHC6 or HRAS. Deacylates GAP43. Mediates depalmitoylation of ZDHHC6. Has lysophospholipase activity. Hydrolyzes prostaglandin glycerol esters (PG-Gs) in the following order prostaglandin D2-glycerol ester (PGD2-G) &gt; prostaglandin E2 glycerol ester (PGE2-G) &gt; prostaglandin F2-alpha-glycerol ester (PGF2-alpha-G). Hydrolyzes 1-arachidonoylglycerol but not 2-arachidonoylglycerol or arachidonoylethanolamide. This Homo sapiens (Human) protein is Acyl-protein thioesterase 2 (LYPLA2).